We begin with the raw amino-acid sequence, 251 residues long: Malonyl-[acyl-carrier protein] O-methyltransferase (251 aa).

Belongs to the methyltransferase superfamily.

It catalyses the reaction malonyl-[ACP] + S-adenosyl-L-methionine = malonyl-[ACP] methyl ester + S-adenosyl-L-homocysteine. It participates in cofactor biosynthesis; biotin biosynthesis. Its function is as follows. Converts the free carboxyl group of a malonyl-thioester to its methyl ester by transfer of a methyl group from S-adenosyl-L-methionine (SAM). It allows to synthesize pimeloyl-ACP via the fatty acid synthetic pathway. The protein is Malonyl-[acyl-carrier protein] O-methyltransferase of Enterobacter lignolyticus (strain SCF1).